The chain runs to 191 residues: CASP-like protein 1D1 (191 aa).

Residues 1-22 (MTSTSKDTPESGYAVPPPNLFG) are Cytoplasmic-facing. A helical transmembrane segment spans residues 23–43 (VDFGLRLLLLASAVSALVVLV). Topologically, residues 44-73 (TSKQTESIPTSLPPPFPAFISRDAKFQHSP) are extracellular. The helical transmembrane segment at 74-94 (AFIYLLVALSVTCFYSIITMV) threads the bilayer. Residues 95–118 (ASFAAITSPSSSPRMLFHLVLSDA) are Cytoplasmic-facing. The chain crosses the membrane as a helical span at residues 119 to 139 (VMAGVMASAAGTAGSVAYLGL). The Extracellular segment spans residues 140–160 (KGNSHVNWNKVCNVYDKFCRH). The helical transmembrane segment at 161 to 181 (VGSSAAVSLVASVLLVSLVVL) threads the bilayer. Over 182 to 191 (SSYSLYRRCR) the chain is Cytoplasmic.

This sequence belongs to the Casparian strip membrane proteins (CASP) family. As to quaternary structure, homodimer and heterodimers.

It is found in the cell membrane. This is CASP-like protein 1D1 from Musa acuminata (Banana).